Here is a 398-residue protein sequence, read N- to C-terminus: Phosphoglycerate kinase (398 aa).

Substrate contacts are provided by residues 23-25, R38, 61-64, R120, and R153; these read DLN and HFGR. ATP contacts are provided by residues K203, E325, and 355-358; that span reads GGDT.

It belongs to the phosphoglycerate kinase family. As to quaternary structure, monomer.

Its subcellular location is the cytoplasm. It catalyses the reaction (2R)-3-phosphoglycerate + ATP = (2R)-3-phospho-glyceroyl phosphate + ADP. Its pathway is carbohydrate degradation; glycolysis; pyruvate from D-glyceraldehyde 3-phosphate: step 2/5. This is Phosphoglycerate kinase from Chelativorans sp. (strain BNC1).